Consider the following 100-residue polypeptide: Small ribosomal subunit protein bS18 (100 aa).

The segment at 1-23 (MTFIRKPAGQAKPQKYSTDAYGR) is disordered.

Belongs to the bacterial ribosomal protein bS18 family. Part of the 30S ribosomal subunit. Forms a tight heterodimer with protein bS6.

In terms of biological role, binds as a heterodimer with protein bS6 to the central domain of the 16S rRNA, where it helps stabilize the platform of the 30S subunit. This chain is Small ribosomal subunit protein bS18, found in Endomicrobium trichonymphae.